Consider the following 297-residue polypeptide: Polyamine aminopropyltransferase 2 (297 aa).

The 233-residue stretch at 26–258 (FYWEPDVEGG…DLWTFFVALK (233 aa)) folds into the PABS domain. Q53 lines the S-methyl-5'-thioadenosine pocket. Spermidine-binding residues include H84 and E108. S-methyl-5'-thioadenosine-binding positions include D128 and 157–158 (DV). The Proton acceptor role is filled by D176. P184 provides a ligand contact to S-methyl-5'-thioadenosine.

The protein belongs to the spermidine/spermine synthase family. Homodimer or homotetramer.

The protein resides in the cytoplasm. It carries out the reaction S-adenosyl 3-(methylsulfanyl)propylamine + putrescine = S-methyl-5'-thioadenosine + spermidine + H(+). The protein operates within amine and polyamine biosynthesis; spermidine biosynthesis; spermidine from putrescine: step 1/1. Functionally, catalyzes the irreversible transfer of a propylamine group from the amino donor S-adenosylmethioninamine (decarboxy-AdoMet) to putrescine (1,4-diaminobutane) to yield spermidine. This Caldanaerobacter subterraneus subsp. tengcongensis (strain DSM 15242 / JCM 11007 / NBRC 100824 / MB4) (Thermoanaerobacter tengcongensis) protein is Polyamine aminopropyltransferase 2.